The chain runs to 109 residues: Small ribosomal subunit protein bS6 (109 aa).

The protein belongs to the bacterial ribosomal protein bS6 family.

Functionally, binds together with bS18 to 16S ribosomal RNA. This chain is Small ribosomal subunit protein bS6, found in Anaplasma phagocytophilum (strain HZ).